The chain runs to 823 residues: Ankyrin repeat domain-containing protein 20A1 (823 aa).

ANK repeat units follow at residues 66–95, 99–128, 132–161, 165–194, and 198–227; these read QHRT…QIDV, ENRT…NPNL, YGNT…HIEA, DNNT…SSHA, and LRRS…DVFA. Disordered regions lie at residues 301–343 and 355–402; these read VPEK…EVED and VQTL…LSEN. Positions 372–384 are enriched in basic and acidic residues; sequence QERHERSEKKQPQ. Coiled coils occupy residues 431-480, 565-724, and 776-805; these read KKLK…KQLE, EMIT…NNST, and LVLE…EKTE.

The chain is Ankyrin repeat domain-containing protein 20A1 (ANKRD20A1) from Homo sapiens (Human).